Here is a 606-residue protein sequence, read N- to C-terminus: Methionine--tRNA ligase (606 aa).

Positions Pro-14–His-24 match the 'HIGH' region motif. 4 residues coordinate Zn(2+): Cys-146, Cys-149, Cys-159, and Cys-162. The 'KMSKS' region motif lies at Lys-351–Ser-355. Ser-354 lines the ATP pocket.

This sequence belongs to the class-I aminoacyl-tRNA synthetase family. MetG type 1 subfamily. Monomer. The cofactor is Zn(2+).

It localises to the cytoplasm. The catalysed reaction is tRNA(Met) + L-methionine + ATP = L-methionyl-tRNA(Met) + AMP + diphosphate. Is required not only for elongation of protein synthesis but also for the initiation of all mRNA translation through initiator tRNA(fMet) aminoacylation. The chain is Methionine--tRNA ligase from Thermobifida fusca (strain YX).